Reading from the N-terminus, the 231-residue chain is Chalcone--flavanone isomerase (231 aa).

Residues Thr-46, Asn-111, and Ser-188 each coordinate substrate.

It belongs to the chalcone isomerase family. Pericarp.

The enzyme catalyses a chalcone = a flavanone.. It participates in secondary metabolite biosynthesis; flavonoid biosynthesis. Functionally, catalyzes the intramolecular cyclization of bicyclic chalcones into tricyclic (S)-flavanones. Responsible for the isomerization of 4,2',4',6'-tetrahydroxychalcone (also termed chalcone) into naringenin. This chain is Chalcone--flavanone isomerase (CHI), found in Zea mays (Maize).